Consider the following 368-residue polypeptide: Histidinol-phosphate aminotransferase (368 aa).

An N6-(pyridoxal phosphate)lysine modification is found at lysine 229.

Belongs to the class-II pyridoxal-phosphate-dependent aminotransferase family. Histidinol-phosphate aminotransferase subfamily. As to quaternary structure, homodimer. Pyridoxal 5'-phosphate serves as cofactor.

The enzyme catalyses L-histidinol phosphate + 2-oxoglutarate = 3-(imidazol-4-yl)-2-oxopropyl phosphate + L-glutamate. The protein operates within amino-acid biosynthesis; L-histidine biosynthesis; L-histidine from 5-phospho-alpha-D-ribose 1-diphosphate: step 7/9. This is Histidinol-phosphate aminotransferase from Acidovorax sp. (strain JS42).